A 230-amino-acid chain; its full sequence is Large ribosomal subunit protein uL1 (230 aa).

It belongs to the universal ribosomal protein uL1 family. As to quaternary structure, part of the 50S ribosomal subunit.

In terms of biological role, binds directly to 23S rRNA. The L1 stalk is quite mobile in the ribosome, and is involved in E site tRNA release. Functionally, protein L1 is also a translational repressor protein, it controls the translation of the L11 operon by binding to its mRNA. The protein is Large ribosomal subunit protein uL1 of Granulibacter bethesdensis (strain ATCC BAA-1260 / CGDNIH1).